The sequence spans 313 residues: Aspartate carbamoyltransferase catalytic subunit (313 aa).

Positions 61 and 62 each coordinate carbamoyl phosphate. Lys-89 provides a ligand contact to L-aspartate. Residues Arg-111, His-139, and Gln-142 each contribute to the carbamoyl phosphate site. The L-aspartate site is built by Arg-172 and Arg-227. 2 residues coordinate carbamoyl phosphate: Gly-268 and Pro-269.

This sequence belongs to the aspartate/ornithine carbamoyltransferase superfamily. ATCase family. In terms of assembly, heterododecamer (2C3:3R2) of six catalytic PyrB chains organized as two trimers (C3), and six regulatory PyrI chains organized as three dimers (R2).

It catalyses the reaction carbamoyl phosphate + L-aspartate = N-carbamoyl-L-aspartate + phosphate + H(+). The protein operates within pyrimidine metabolism; UMP biosynthesis via de novo pathway; (S)-dihydroorotate from bicarbonate: step 2/3. Functionally, catalyzes the condensation of carbamoyl phosphate and aspartate to form carbamoyl aspartate and inorganic phosphate, the committed step in the de novo pyrimidine nucleotide biosynthesis pathway. This is Aspartate carbamoyltransferase catalytic subunit from Gluconobacter oxydans (strain 621H) (Gluconobacter suboxydans).